A 127-amino-acid polypeptide reads, in one-letter code: MIRTMMNAKIHRARVTESNLNYVGSITIDSDILEAVDILPNEKVAIVNNNNGARFETYVIAGERGSGKICLNGAASRLVEVGDVVIIMTYAQLNEEEIQNHAPKVAVMNEDNVIIEMIHEKENTIVL.

S25 (schiff-base intermediate with substrate; via pyruvic acid) is an active-site residue. A Pyruvic acid (Ser) modification is found at S25. A substrate-binding site is contributed by T57. Catalysis depends on Y58, which acts as the Proton donor. 73-75 lines the substrate pocket; sequence GAA.

Belongs to the PanD family. Heterooctamer of four alpha and four beta subunits. The cofactor is pyruvate. Post-translationally, is synthesized initially as an inactive proenzyme, which is activated by self-cleavage at a specific serine bond to produce a beta-subunit with a hydroxyl group at its C-terminus and an alpha-subunit with a pyruvoyl group at its N-terminus.

It is found in the cytoplasm. The catalysed reaction is L-aspartate + H(+) = beta-alanine + CO2. The protein operates within cofactor biosynthesis; (R)-pantothenate biosynthesis; beta-alanine from L-aspartate: step 1/1. Catalyzes the pyruvoyl-dependent decarboxylation of aspartate to produce beta-alanine. This chain is Aspartate 1-decarboxylase, found in Staphylococcus aureus (strain MSSA476).